The following is a 152-amino-acid chain: D-aminoacyl-tRNA deacylase (152 aa).

Residues 137–138 (GP) carry the Gly-cisPro motif, important for rejection of L-amino acids motif.

Belongs to the DTD family. In terms of assembly, homodimer.

The protein localises to the cytoplasm. The enzyme catalyses glycyl-tRNA(Ala) + H2O = tRNA(Ala) + glycine + H(+). It catalyses the reaction a D-aminoacyl-tRNA + H2O = a tRNA + a D-alpha-amino acid + H(+). An aminoacyl-tRNA editing enzyme that deacylates mischarged D-aminoacyl-tRNAs. Also deacylates mischarged glycyl-tRNA(Ala), protecting cells against glycine mischarging by AlaRS. Acts via tRNA-based rather than protein-based catalysis; rejects L-amino acids rather than detecting D-amino acids in the active site. By recycling D-aminoacyl-tRNA to D-amino acids and free tRNA molecules, this enzyme counteracts the toxicity associated with the formation of D-aminoacyl-tRNA entities in vivo and helps enforce protein L-homochirality. The protein is D-aminoacyl-tRNA deacylase of Geobacillus sp. (strain WCH70).